The sequence spans 563 residues: Arginine--tRNA ligase (563 aa).

The 'HIGH' region motif lies at 120-130 (PNIAKPFHVGH).

It belongs to the class-I aminoacyl-tRNA synthetase family. As to quaternary structure, monomer.

It localises to the cytoplasm. The enzyme catalyses tRNA(Arg) + L-arginine + ATP = L-arginyl-tRNA(Arg) + AMP + diphosphate. In Clostridium acetobutylicum (strain ATCC 824 / DSM 792 / JCM 1419 / IAM 19013 / LMG 5710 / NBRC 13948 / NRRL B-527 / VKM B-1787 / 2291 / W), this protein is Arginine--tRNA ligase.